A 104-amino-acid polypeptide reads, in one-letter code: Thioredoxin 1 (104 aa).

A Thioredoxin domain is found at 2–104 (VKIVTSQAEF…LKQLIEKYAA (103 aa)). Active-site nucleophile residues include Cys-30 and Cys-33. A disulfide bond links Cys-30 and Cys-33.

Belongs to the thioredoxin family. The disulfide bond between Cys-30 and Cys-33 acts as a redox-active center and is reduced by thioredoxin reductase TRXR.

Its subcellular location is the cytoplasm. Participates in various redox reactions through the reversible oxidation of its active center dithiol to a disulfide and catalyzes dithiol-disulfide exchange reactions. By modifying the redox status of targeted proteins, induces changes in their structure and activity. Reduces oxidized glutathione (GSSG), thereby acting as a backup for the glutathione redox system. Reduces nitroglutathione (GSNO), a compound involved in the transport of nitric oxide (NO). Also reduces oxidative stress by detoxifying hydrogen peroxide, tert-butyl hydroperoxide and cumene hydroperoxide. Activates ornithine aminotransferase OAT by reducing a disulfide bond in the substrate binding loop, thereby enhancing the affinity of OAT for its substrates. May reduce S-adenosyl-L-homocysteine hydrolase SAHH. In Plasmodium falciparum (isolate 3D7), this protein is Thioredoxin 1.